The sequence spans 363 residues: D-alanine--D-alanine ligase (363 aa).

The region spanning 146 to 352 is the ATP-grasp domain; it reads KLCAADAGVA…FTALIDKLLH (207 aa). 179–234 provides a ligand contact to ATP; it reads DSTFGYPLFVKPASLGSSVGISKVHLPAALPEALKVACSYDRKILVEAAVSGKEIE. 3 residues coordinate Mg(2+): D305, E319, and N321.

This sequence belongs to the D-alanine--D-alanine ligase family. Mg(2+) is required as a cofactor. It depends on Mn(2+) as a cofactor.

Its subcellular location is the cytoplasm. It carries out the reaction 2 D-alanine + ATP = D-alanyl-D-alanine + ADP + phosphate + H(+). Its pathway is cell wall biogenesis; peptidoglycan biosynthesis. In terms of biological role, cell wall formation. In Chlorobium limicola (strain DSM 245 / NBRC 103803 / 6330), this protein is D-alanine--D-alanine ligase.